Reading from the N-terminus, the 502-residue chain is ATP synthase subunit alpha (502 aa).

169-176 (GDRQTGKT) is a binding site for ATP.

It belongs to the ATPase alpha/beta chains family. F-type ATPases have 2 components, CF(1) - the catalytic core - and CF(0) - the membrane proton channel. CF(1) has five subunits: alpha(3), beta(3), gamma(1), delta(1), epsilon(1). CF(0) has three main subunits: a(1), b(2) and c(9-12). The alpha and beta chains form an alternating ring which encloses part of the gamma chain. CF(1) is attached to CF(0) by a central stalk formed by the gamma and epsilon chains, while a peripheral stalk is formed by the delta and b chains.

It is found in the cell inner membrane. The enzyme catalyses ATP + H2O + 4 H(+)(in) = ADP + phosphate + 5 H(+)(out). In terms of biological role, produces ATP from ADP in the presence of a proton gradient across the membrane. The alpha chain is a regulatory subunit. The chain is ATP synthase subunit alpha from Citrifermentans bemidjiense (strain ATCC BAA-1014 / DSM 16622 / JCM 12645 / Bem) (Geobacter bemidjiensis).